An 807-amino-acid polypeptide reads, in one-letter code: MPKHDSLWLKSLRWIQKHLVHTIVVPQDPFADLNLDASRPLAYVMKTESLSDIAALSEITAKLGLPSPYEPLVANGVIAPRVVCLQGRKPLFGERAGNEPFLECFMRLLAVHKERPELDIQLVPVSLYWGRTPGKEDDTMKAAVFERENPTWLRKCLMILFLGRHNFVQFSNAVSLRYMADEHGTDMGIAHKLARVARVHFRRQRKVMTGPVLPNRQALFHSLLKSESLRKAIQEEAANKKISETQARETAIEYLDEIAADYSDSLVRIAERFLTWLWNKLYSGINIKGAEQVRQLHHDGHEIVYVPCHRSHMDYLLLSYILYYQGMVPPHIAAGINLNFWPAGPMFRRGGAFFIRRSFNGNKLYTAVFREYLDQLFAKGYSVEYFSEGGRSRTGRLLAPKTGMIAMTMNSVLRGIERPVTLVPVYLGYDHVMEVATYHKELSGKKKKKESVWQVFGAIRKLGNFGQGYVNFGEPITLQNFLNERAPNWRTELADDPEQKPSWLTPAVNVLANRVMTNINDAAAASSVTLTSLVLLATDQNALERSLLERQLDLYLTLLKKVPYTTYTSVAEGDGKHLVQQGLELNKFVVCADPLGEIVSIEASQAVSMTYYRNNIIHLFIVPSLIASCLTHNKQIPRQQVVSIVADFYPLLKAELFMGIKDVPAYVNQVLDFFIEQGLVVETDTLTVVPEHTSQLLLLASSVSETLQRYAIIFNLLANRPKMERSELESESHLLAQRLGALHGITAPEFYDKKLYGTLSVKLKELGYLADNQDKSNINRIRDQANSLLRPSVKQTIVASVTAEHTV.

The HXXXXD motif signature appears at 308 to 313 (CHRSHM).

Belongs to the GPAT/DAPAT family.

The protein localises to the cell inner membrane. The enzyme catalyses sn-glycerol 3-phosphate + an acyl-CoA = a 1-acyl-sn-glycero-3-phosphate + CoA. It functions in the pathway phospholipid metabolism; CDP-diacylglycerol biosynthesis; CDP-diacylglycerol from sn-glycerol 3-phosphate: step 1/3. The chain is Glycerol-3-phosphate acyltransferase from Shewanella baltica (strain OS155 / ATCC BAA-1091).